Consider the following 32-residue polypeptide: TCSIPYEYSNGKLKRTLYYSNGVYANSFTENN.

Expressed by the venom gland.

It is found in the secreted. The polypeptide is Hainantoxin F8-35.23 (Cyriopagopus hainanus (Chinese bird spider)).